Here is a 472-residue protein sequence, read N- to C-terminus: Ras-GEF domain-containing family member 1B (472 aa).

An N-terminal Ras-GEF domain is found at 34 to 164 (QDNNLLSGSL…IIQNLIRKLA (131 aa)). One can recognise a Ras-GEF domain in the interval 204-452 (DPYTVAQQLT…YLASYESEGP (249 aa)).

Guanine nucleotide exchange factor (GEF) with specificity for rap2a and other Ras family proteins (in vitro). In Xenopus tropicalis (Western clawed frog), this protein is Ras-GEF domain-containing family member 1B (rasgef1b).